The following is a 517-amino-acid chain: Acetylcholine receptor subunit gamma (517 aa).

An N-terminal signal peptide occupies residues 1-22 (MHGGQGPLLLLLLLAVCLGAQG). Residues 23–240 (RNQEERLLAD…VVFYLLIQRK (218 aa)) lie on the Extracellular side of the membrane. Asn52 and Asn163 each carry an N-linked (GlcNAc...) asparagine glycan. Residues Cys150 and Cys164 are joined by a disulfide bond. The next 3 helical transmembrane spans lie at 241 to 265 (PLFYVINIIAPCVLISSVAILIHFL), 275 to 293 (TVAINVLLAQTVFLFLVAK), and 309 to 330 (LTFLLVVTILIVVNAVVVLNVS). Residues 331–474 (LRSPHTHSMA…WFLVGRVLDR (144 aa)) are Cytoplasmic-facing. A helical transmembrane segment spans residues 475–495 (VCFLAMLSLFICGTAGIFLMA).

This sequence belongs to the ligand-gated ion channel (TC 1.A.9) family. Acetylcholine receptor (TC 1.A.9.1) subfamily. Gamma/CHRNG sub-subfamily. Pentamer of two alpha chains, and one each of the beta, delta, and gamma (in immature muscle) or epsilon (in mature muscle) chains.

It localises to the postsynaptic cell membrane. It is found in the cell membrane. It carries out the reaction K(+)(in) = K(+)(out). It catalyses the reaction Na(+)(in) = Na(+)(out). Its function is as follows. After binding acetylcholine, the AChR responds by an extensive change in conformation that affects all subunits and leads to opening of an ion-conducting channel across the plasma membrane. The chain is Acetylcholine receptor subunit gamma from Homo sapiens (Human).